The primary structure comprises 162 residues: D-beta-D-heptose 1-phosphate adenylyltransferase (162 aa).

It carries out the reaction D-glycero-beta-D-manno-heptose 1-phosphate + ATP + H(+) = ADP-D-glycero-beta-D-manno-heptose + diphosphate. Its pathway is nucleotide-sugar biosynthesis; ADP-L-glycero-beta-D-manno-heptose biosynthesis; ADP-L-glycero-beta-D-manno-heptose from D-glycero-beta-D-manno-heptose 7-phosphate: step 3/4. The protein operates within bacterial outer membrane biogenesis; LPS core biosynthesis. Catalyzes the ADP transfer from ATP to D-glycero-beta-D-manno-heptose 1-phosphate, yielding ADP-D-glycero-beta-D-manno-heptose. Cannot use GTP, UTP, or CTP as substrate. Is not active against the alpha-anomer substrate. Is also able to catalyze the ADP transfer to beta-glucose 1-phosphate in vitro, yielding ADP-beta-glucose. The polypeptide is D-beta-D-heptose 1-phosphate adenylyltransferase (Bordetella bronchiseptica (strain ATCC BAA-588 / NCTC 13252 / RB50) (Alcaligenes bronchisepticus)).